Reading from the N-terminus, the 489-residue chain is Glucose-6-phosphate isomerase (489 aa).

E309 serves as the catalytic Proton donor. Active-site residues include H340 and K459.

The protein belongs to the GPI family.

The protein localises to the cytoplasm. The catalysed reaction is alpha-D-glucose 6-phosphate = beta-D-fructose 6-phosphate. Its pathway is carbohydrate biosynthesis; gluconeogenesis. It participates in carbohydrate degradation; glycolysis; D-glyceraldehyde 3-phosphate and glycerone phosphate from D-glucose: step 2/4. Its function is as follows. Catalyzes the reversible isomerization of glucose-6-phosphate to fructose-6-phosphate. In Idiomarina loihiensis (strain ATCC BAA-735 / DSM 15497 / L2-TR), this protein is Glucose-6-phosphate isomerase.